Here is a 1163-residue protein sequence, read N- to C-terminus: NACHT, LRR and PYD domains-containing protein 5 (1163 aa).

Basic and acidic residues-rich tracts occupy residues 1-42 (MGPP…KDQG), 56-94 (PEKE…KDQG), and 108-127 (PEKD…EQKS). Positions 1-201 (MGPPEKESKA…TEADKDNGGD (201 aa)) are disordered. Polar residues predominate over residues 128–137 (ESTMSPSENV). The segment covering 153–173 (ASERKMTSPENDSKSIQKDQG) has biased composition (basic and acidic residues). An NACHT domain is found at 243 to 565 (HTIILHGRPG…AALYYVLEGL (323 aa)). ATP is bound at residue 249–256 (GRPGVGKS). LRR repeat units follow at residues 801–822 (NLKY…LACE), 830–851 (SVET…MIST), 858–878 (RLKC…ISLG), 887–906 (LLQK…CHLL), 915–935 (NLTH…QQLC), 944–964 (ALQR…GFLA), 972–993 (KLTH…LLCE), 1001–1022 (YLQE…DLAC), 1029–1050 (HLKS…TLCE), 1058–1079 (SLRR…ALSL), and 1086–1107 (HLNS…KLCS).

It belongs to the NLRP family. Component of the subcortical maternal complex (SCMC), at least composed of NLRP5, KHDC3, OOEP, and TLE6. Within the complex, interacts with OOEP, KHDC3 and TLE6. The SCMC may facilitate translocation of its components between the nuclear and cytoplasmic compartments. As part of the SCMC interacts with the SCMC-associated protein ZBED3. As part of the SCMC interacts with the SCMC-associated protein CFL1/Cofilin-1. Interacts with PRKCE. Interacts with TUBB3 at cytoskeleton microtubules. Post-translationally, phosphorylated by PRKCE.

It is found in the cytoplasm. Its subcellular location is the cytoplasmic vesicle. It localises to the secretory vesicle. The protein resides in the cortical granule. The protein localises to the mitochondrion. It is found in the nucleus. Its subcellular location is the nucleolus. It localises to the golgi apparatus. Its function is as follows. Component of the subcortical maternal complex (SCMC), a multiprotein complex that plays a key role in early embryonic development. The SCMC complex is a structural constituent of cytoplasmic lattices, which consist in fibrous structures found in the cytoplasm of oocytes and preimplantation embryos. They are required to store maternal proteins critical for embryonic development, such as proteins that control epigenetic reprogramming of the preimplantation embryo, and prevent their degradation or activation. Required for the localization of cortical granules to the cortex of oocytes, via association with the cortical actin scaffold. Required for cortical actin clearance prior to oocyte exocytosis and prevention of polyspermy. Involved in regulating post-fertilization Ca(2+) release and endoplasmic reticulum storage (ER) storage via regulation of cellular localization. May be involved in the localization of mitochondria to the cytoplasm and perinuclear region in oocytes and early stage embryos, independent of its role in CPL formation. This Mus musculus (Mouse) protein is NACHT, LRR and PYD domains-containing protein 5.